The primary structure comprises 265 residues: MIKWPWKAQEITQNEDWPWNDALAIPLLVNLTAQEQARLIALAERFLQQKRLVALQGFELDSLKSARIALIFCLPILELGIEWLDGFHEVLIYPAPFVVDDEWEDDIGLVHSQRVVQSGQSWQQGPIILNWLDIQDSFDASGFNLIIHEVAHKLDMRNGDRASGIPFIPLRDVAGWEHDLHAAMNNIQDEIDLVGESAASIDAYAATDPAECFAVLSEYFFSAPELFAPRFPALWQRFCQFYRQDPSQRLRVNAAEGDYGEESEH.

Positions 111, 148, 152, and 211 each coordinate Zn(2+).

Belongs to the MtfA family. As to quaternary structure, interacts with Mlc. Zn(2+) is required as a cofactor.

It is found in the cytoplasm. In terms of biological role, involved in the modulation of the activity of the glucose-phosphotransferase system (glucose-PTS). Interacts with the transcriptional repressor Mlc, preventing its interaction with DNA and leading to the modulation of expression of genes regulated by Mlc, including ptsG, which encodes the PTS system glucose-specific EIICB component. Its function is as follows. Shows zinc-dependent metallopeptidase activity. The protein is Mlc titration factor A of Salmonella schwarzengrund (strain CVM19633).